Here is a 69-residue protein sequence, read N- to C-terminus: Large ribosomal subunit protein uL29 (69 aa).

This sequence belongs to the universal ribosomal protein uL29 family.

The protein is Large ribosomal subunit protein uL29 of Synechococcus sp. (strain WH7803).